We begin with the raw amino-acid sequence, 369 residues long: Glutamate 5-kinase (369 aa).

Lys14 serves as a coordination point for ATP. Ser54, Asp141, and Asn153 together coordinate substrate. ATP contacts are provided by residues 173–174 and 215–221; these read SD and TGGMVTK. Positions 277–355 constitute a PUA domain; the sequence is RGRLHLDPGA…SELATALGPA (79 aa).

This sequence belongs to the glutamate 5-kinase family.

It is found in the cytoplasm. The catalysed reaction is L-glutamate + ATP = L-glutamyl 5-phosphate + ADP. It functions in the pathway amino-acid biosynthesis; L-proline biosynthesis; L-glutamate 5-semialdehyde from L-glutamate: step 1/2. In terms of biological role, catalyzes the transfer of a phosphate group to glutamate to form L-glutamate 5-phosphate. The chain is Glutamate 5-kinase from Salinispora arenicola (strain CNS-205).